The following is an 860-amino-acid chain: MQEQYRPEEIESNVQQHWDEKQTFKVTEDEGKEKYYCLSMLPYPSGRLHMGHVRNYTIGDVISRYQRMLGKNVLQPIGWDAFGLPAEGAAVKNNTAPAPWTYANIDYMKNQLKLLGFGYDWNRELATCQPEYYRWEQWFFTKLYEKGLVYKKTSAVNWCPHDMTVLANEQVIDGCCWRCDSKVERKEIPQWFVKITDYADELLNDLDKLESWPEQVKTMQRNWIGRSEGVEIEFTVLNSEEKLSVYTTRPDTFMGVTYLAVAAGHPLAAQAALNNPALADFIAECRNTKVAEADMATMEKKGMATGLFAAHPLTGEKVPVWVANFVLMEYGTGAVMAVPGHDQRDWEFASKYSLPIKPVILAADGSEPDLSGSAMTEKGTLFNSGEFDGLSHEAGFDAIAAKLADKGVGERKVNYRLRDWGVSRQRYWGAPIPMVTLEDGTVMPTPEDQLPVILPEDVVMDGITSPIKADAEWAKTTVNGQPALRETDTFDTFMESSWYYARYTCPNYDKGMLDPAAANYWLPVDQYVGGIEHAIMHLLYFRFFHKLLRDTGLVNSDEPAKRLLCQGMVLADAFYFTGSNGERNWVSPTDVSVERDEKGRITKATDNDGNELIYAGMSKMSKSKNNGIDPQVMVERYGADTVRLFMMFASPAEMTLEWQESGVEGANRFLKRVWRLAFEHTEKGPTVALDLDALNDEQKALRRDLHKTISKVSDDIGRRQTFNTAIAAIMELMNKLARAPQETEQDRALMQEALLAVVRMLNPFTPHASFVLWQALGGAGEIDNAPWPQAEEAAMVEDSLLVVVQVNGKVRGKITVAADATQEQVQARAAQEHLVAKYLDGVTIRKVIFVPGKLLNLVVG.

The short motif at 42–52 is the 'HIGH' region element; it reads PYPSGRLHMGH. Residues 619-623 carry the 'KMSKS' region motif; that stretch reads KMSKS. Lys-622 provides a ligand contact to ATP.

Belongs to the class-I aminoacyl-tRNA synthetase family.

Its subcellular location is the cytoplasm. It catalyses the reaction tRNA(Leu) + L-leucine + ATP = L-leucyl-tRNA(Leu) + AMP + diphosphate. This chain is Leucine--tRNA ligase, found in Erwinia tasmaniensis (strain DSM 17950 / CFBP 7177 / CIP 109463 / NCPPB 4357 / Et1/99).